Here is a 92-residue protein sequence, read N- to C-terminus: Small ribosomal subunit protein uS19 (92 aa).

The protein belongs to the universal ribosomal protein uS19 family.

In terms of biological role, protein S19 forms a complex with S13 that binds strongly to the 16S ribosomal RNA. The sequence is that of Small ribosomal subunit protein uS19 from Rhodopseudomonas palustris (strain BisB5).